The sequence spans 371 residues: 4-hydroxyphenylpyruvate dioxygenase-like protein (371 aa).

VOC domains follow at residues 7–135 (RLCH…LLQR) and 160–328 (HVDH…VFTK). Residues H163, H258, and E339 each contribute to the Fe cation site.

The protein belongs to the 4HPPD family. Fe cation is required as a cofactor.

Its subcellular location is the mitochondrion. The catalysed reaction is 3-(4-hydroxyphenyl)pyruvate + O2 = (S)-4-hydroxymandelate + CO2. In terms of biological role, iron-dependent dioxygenase that catalyzes the conversion of 4-hydroxyphenylpyruvate (4-HPPA) to 4-hydroxymandelate (4-HMA) in the mitochondria, one of the steps in the biosynthesis of coenzyme Q10 from tyrosine. The sequence is that of 4-hydroxyphenylpyruvate dioxygenase-like protein from Rattus norvegicus (Rat).